The sequence spans 421 residues: U-box domain-containing protein 25 (421 aa).

Residues 13-88 (QIPYHFRCPI…QEWCVANRSN (76 aa)) form the U-box domain.

The catalysed reaction is S-ubiquitinyl-[E2 ubiquitin-conjugating enzyme]-L-cysteine + [acceptor protein]-L-lysine = [E2 ubiquitin-conjugating enzyme]-L-cysteine + N(6)-ubiquitinyl-[acceptor protein]-L-lysine.. The protein operates within protein modification; protein ubiquitination. In terms of biological role, functions as an E3 ubiquitin ligase. The protein is U-box domain-containing protein 25 (PUB25) of Arabidopsis thaliana (Mouse-ear cress).